The chain runs to 91 residues: Dynein 8 kDa light chain, flagellar outer arm (91 aa).

It belongs to the dynein light chain family. In terms of assembly, consists of at least 3 heavy chains (alpha, beta and gamma), 2 intermediate chains and 8 light chains.

It is found in the cytoplasm. It localises to the cytoskeleton. Its subcellular location is the flagellum axoneme. The chain is Dynein 8 kDa light chain, flagellar outer arm from Chlamydomonas reinhardtii (Chlamydomonas smithii).